The sequence spans 216 residues: Redox-sensing transcriptional repressor Rex (216 aa).

Positions 20–59 form a DNA-binding region, H-T-H motif; sequence QYYRLFKSLVEENVTRTNSQLISEKIGVDAATIRRDFSLF. 94–99 provides a ligand contact to NAD(+); the sequence is GVGNLG.

The protein belongs to the transcriptional regulatory Rex family. As to quaternary structure, homodimer.

Its subcellular location is the cytoplasm. In terms of biological role, modulates transcription in response to changes in cellular NADH/NAD(+) redox state. The polypeptide is Redox-sensing transcriptional repressor Rex (Lactococcus lactis subsp. lactis (strain IL1403) (Streptococcus lactis)).